The following is a 99-amino-acid chain: Cytochrome c oxidase subunit 4 isoform 1, mitochondrial (99 aa).

Over 1-73 (SVVKSEDFTL…SFAEMNRRSN (73 aa)) the chain is Mitochondrial matrix. N6-acetyllysine; alternate is present on Lys-4. The residue at position 4 (Lys-4) is an N6-succinyllysine; alternate. Residue Lys-28 is modified to N6-acetyllysine. Phosphoserine occurs at positions 31 and 33. Lys-35 carries the post-translational modification N6-acetyllysine; alternate. N6-succinyllysine; alternate is present on Lys-35. N6-acetyllysine is present on Lys-42. Residues 74-99 (EWKTVVGTAMFFIGITALVIMWEKLY) traverse the membrane as a helical segment.

The protein belongs to the cytochrome c oxidase IV family. In terms of assembly, component of the cytochrome c oxidase (complex IV, CIV), a multisubunit enzyme composed of 14 subunits. The complex is composed of a catalytic core of 3 subunits MT-CO1, MT-CO2 and MT-CO3, encoded in the mitochondrial DNA, and 11 supernumerary subunits COX4I, COX5A, COX5B, COX6A, COX6B, COX6C, COX7A, COX7B, COX7C, COX8 and NDUFA4, which are encoded in the nuclear genome. The complex exists as a monomer or a dimer and forms supercomplexes (SCs) in the inner mitochondrial membrane with NADH-ubiquinone oxidoreductase (complex I, CI) and ubiquinol-cytochrome c oxidoreductase (cytochrome b-c1 complex, complex III, CIII), resulting in different assemblies (supercomplex SCI(1)III(2)IV(1) and megacomplex MCI(2)III(2)IV(2)). Interacts with PHB2; the interaction decreases in absence of SPHK2. Interacts with AFG1L. Interacts with ABCB7; this interaction allows the regulation of cellular iron homeostasis and cellular reactive oxygen species (ROS) levels in cardiomyocytes. Interacts with FLVCR2; this interaction occurs in the absence of heme and is disrupted upon heme binding. Interacts with IRGC.

Its subcellular location is the mitochondrion inner membrane. It functions in the pathway energy metabolism; oxidative phosphorylation. Its function is as follows. Component of the cytochrome c oxidase, the last enzyme in the mitochondrial electron transport chain which drives oxidative phosphorylation. The respiratory chain contains 3 multisubunit complexes succinate dehydrogenase (complex II, CII), ubiquinol-cytochrome c oxidoreductase (cytochrome b-c1 complex, complex III, CIII) and cytochrome c oxidase (complex IV, CIV), that cooperate to transfer electrons derived from NADH and succinate to molecular oxygen, creating an electrochemical gradient over the inner membrane that drives transmembrane transport and the ATP synthase. Cytochrome c oxidase is the component of the respiratory chain that catalyzes the reduction of oxygen to water. Electrons originating from reduced cytochrome c in the intermembrane space (IMS) are transferred via the dinuclear copper A center (CU(A)) of subunit 2 and heme A of subunit 1 to the active site in subunit 1, a binuclear center (BNC) formed by heme A3 and copper B (CU(B)). The BNC reduces molecular oxygen to 2 water molecules using 4 electrons from cytochrome c in the IMS and 4 protons from the mitochondrial matrix. This is Cytochrome c oxidase subunit 4 isoform 1, mitochondrial (COX4I1) from Mandrillus sphinx (Mandrill).